The sequence spans 344 residues: Biotin synthase (344 aa).

In terms of domain architecture, Radical SAM core spans Ala-40–Arg-267. [4Fe-4S] cluster is bound by residues Cys-55, Cys-59, and Cys-62. [2Fe-2S] cluster contacts are provided by Cys-99, Cys-130, Cys-190, and Arg-262.

The protein belongs to the radical SAM superfamily. Biotin synthase family. Homodimer. The cofactor is [4Fe-4S] cluster. [2Fe-2S] cluster is required as a cofactor.

It catalyses the reaction (4R,5S)-dethiobiotin + (sulfur carrier)-SH + 2 reduced [2Fe-2S]-[ferredoxin] + 2 S-adenosyl-L-methionine = (sulfur carrier)-H + biotin + 2 5'-deoxyadenosine + 2 L-methionine + 2 oxidized [2Fe-2S]-[ferredoxin]. It functions in the pathway cofactor biosynthesis; biotin biosynthesis; biotin from 7,8-diaminononanoate: step 2/2. Its function is as follows. Catalyzes the conversion of dethiobiotin (DTB) to biotin by the insertion of a sulfur atom into dethiobiotin via a radical-based mechanism. This chain is Biotin synthase, found in Xanthomonas oryzae pv. oryzae (strain PXO99A).